A 235-amino-acid chain; its full sequence is Segregation and condensation protein A (235 aa).

It belongs to the ScpA family. As to quaternary structure, component of a cohesin-like complex composed of ScpA, ScpB and the Smc homodimer, in which ScpA and ScpB bind to the head domain of Smc. The presence of the three proteins is required for the association of the complex with DNA.

The protein resides in the cytoplasm. Functionally, participates in chromosomal partition during cell division. May act via the formation of a condensin-like complex containing Smc and ScpB that pull DNA away from mid-cell into both cell halves. The protein is Segregation and condensation protein A of Streptococcus equi subsp. zooepidemicus (strain H70).